A 378-amino-acid chain; its full sequence is mRNA cap guanine-N(7) methyltransferase (378 aa).

The 308-residue stretch at 24-331 (SRIFFMRNMN…MYLVFGFRKK (308 aa)) folds into the mRNA cap 0 methyltransferase domain. 33-34 (NN) is a binding site for mRNA. Positions 37, 62, 84, 116, 138, and 143 each coordinate S-adenosyl-L-methionine. 2 stretches are compositionally biased toward basic and acidic residues: residues 335-347 (EKNLESEAPEIKK) and 356-378 (DTDKTAEKNEERIEEKEENPSHC). Residues 335 to 378 (EKNLESEAPEIKKVTPVPLNEDTDKTAEKNEERIEEKEENPSHC) form a disordered region.

Belongs to the class I-like SAM-binding methyltransferase superfamily. mRNA cap 0 methyltransferase family.

The protein resides in the nucleus. It catalyses the reaction a 5'-end (5'-triphosphoguanosine)-ribonucleoside in mRNA + S-adenosyl-L-methionine = a 5'-end (N(7)-methyl 5'-triphosphoguanosine)-ribonucleoside in mRNA + S-adenosyl-L-homocysteine. In terms of biological role, mRNA-capping methyltransferase that methylates the N7 position of the added guanosine to the 5'-cap structure of mRNAs. Binds RNA containing 5'-terminal GpppC. This chain is mRNA cap guanine-N(7) methyltransferase, found in Caenorhabditis briggsae.